The sequence spans 373 residues: Muconate cycloisomerase 1 (373 aa).

Residue Lys169 is part of the active site. Catalysis depends on Lys169, which acts as the Proton acceptor. Mn(2+)-binding residues include Asp198, Glu224, and Asp249. The active-site Proton donor is Glu327.

This sequence belongs to the mandelate racemase/muconate lactonizing enzyme family. Requires Mn(2+) as cofactor.

It catalyses the reaction (S)-muconolactone = cis,cis-muconate + H(+). The chain is Muconate cycloisomerase 1 (catB) from Rhodococcus opacus (Nocardia opaca).